The primary structure comprises 488 residues: Tocopherol cyclase, chloroplastic (488 aa).

The N-terminal 76 residues, 1–76 (MEIRSLIVSM…VPTSPNRELR (76 aa)), are a transit peptide targeting the chloroplast.

The protein localises to the plastid. The protein resides in the chloroplast. Its subcellular location is the plastoglobule. The enzyme catalyses delta-tocopherol = 2-methyl-6-phytyl-1,4-benzene-1,4-diol. It catalyses the reaction gamma-tocopherol = 2,3-dimethyl-6-phytylbenzene-1,4-diol. It carries out the reaction delta-tocotrienol = 6-geranylgeranyl-2-methylbenzene-1,4-diol. The catalysed reaction is gamma-tocotrienol = 6-geranylgeranyl-2,3-dimethylbenzene-1,4-diol. It participates in cofactor biosynthesis; tocopherol biosynthesis. Functionally, involved in the synthesis of both tocopherols and tocotrienols (vitamin E), which presumably protect photosynthetic complexes from oxidative stress. Catalyzes the conversion of 2-methyl-6-phytyl-1,4-hydroquinone and 2,3-dimethyl-5-phytyl-1,4-hydroquinone (DMPQ) to delta- and gamma-tocopherol respectively. Also converts 2,3-dimethyl-5-geranylgeranyl-1,4-hydroquinone (DMGQ) to gamma-tocotrienol. This Arabidopsis thaliana (Mouse-ear cress) protein is Tocopherol cyclase, chloroplastic (VTE1).